The primary structure comprises 425 residues: Caveolae-associated protein 2 (425 aa).

A disordered region spans residues methionine 1–asparagine 42. Position 2 is an N-acetylglycine (glycine 2). The tract at residues glycine 2–alanine 168 is interaction with CAVIN1. Residues lysine 10–lysine 22 are compositionally biased toward basic and acidic residues. Phosphoserine occurs at positions 27, 35, 37, and 51. Coiled-coil stretches lie at residues leucine 61–arginine 82 and threonine 125–histidine 154. The leucine-zipper stretch occupies residues leucine 62–leucine 100. Phosphothreonine occurs at positions 196 and 199. Disordered regions lie at residues threonine 199–serine 234 and isoleucine 271–serine 425. A phosphoserine mark is found at serine 203, serine 204, and serine 218. A compositionally biased stretch (acidic residues) spans serine 203–alanine 219. Residues histidine 210–arginine 268 adopt a coiled-coil conformation. Over residues glutamate 220–serine 234 the composition is skewed to basic and acidic residues. The span at serine 274–serine 287 shows a compositional bias: polar residues. A phosphoserine mark is found at serine 283, serine 284, serine 287, serine 288, and serine 293. Over residues arginine 303 to aspartate 317 the composition is skewed to basic and acidic residues. A phosphoserine mark is found at serine 332, serine 341, serine 366, and serine 370. Residue threonine 375 is modified to Phosphothreonine. Residues isoleucine 376–valine 385 show a composition bias toward acidic residues. The residue at position 395 (tyrosine 395) is a Phosphotyrosine. Serine 403 bears the Phosphoserine mark.

The protein belongs to the CAVIN family. Component of the CAVIN complex composed of CAVIN1, CAVIN2, CAVIN3 and CAVIN4. Binds to PRKCA in the presence of phosphatidylserine. Interacts with CAVIN4; this augments the transactivation of NPPA by CAVIN4. Interacts with CAVIN1. Interacts with CAV3. Phosphorylated on Ser residues. As to expression, highly expressed in heart and lung, and expressed at lower levels in brain, kidney, liver, pancreas, placenta, and skeletal muscle.

The protein resides in the cytoplasm. It localises to the cytosol. The protein localises to the membrane. Its subcellular location is the caveola. In terms of biological role, plays an important role in caveolar biogenesis and morphology. Regulates caveolae morphology by inducing membrane curvature within caveolae. Plays a role in caveola formation in a tissue-specific manner. Required for the formation of caveolae in the lung and fat endothelia but not in the heart endothelia. Negatively regulates the size or stability of CAVIN complexes in the lung endothelial cells. May play a role in targeting PRKCA to caveolae. This is Caveolae-associated protein 2 from Homo sapiens (Human).